A 398-amino-acid polypeptide reads, in one-letter code: Dual-specificity RNA methyltransferase RlmN (398 aa).

Glutamate 119 serves as the catalytic Proton acceptor. Positions 125 to 364 (EADRATLCVS…TIVRKTRGDD (240 aa)) constitute a Radical SAM core domain. Cysteine 132 and cysteine 369 are joined by a disulfide. [4Fe-4S] cluster-binding residues include cysteine 139, cysteine 143, and cysteine 146. S-adenosyl-L-methionine-binding positions include 193–194 (GE), serine 225, 247–249 (SLH), and asparagine 326. Cysteine 369 acts as the S-methylcysteine intermediate in catalysis.

The protein belongs to the radical SAM superfamily. RlmN family. [4Fe-4S] cluster is required as a cofactor.

It is found in the cytoplasm. The enzyme catalyses adenosine(2503) in 23S rRNA + 2 reduced [2Fe-2S]-[ferredoxin] + 2 S-adenosyl-L-methionine = 2-methyladenosine(2503) in 23S rRNA + 5'-deoxyadenosine + L-methionine + 2 oxidized [2Fe-2S]-[ferredoxin] + S-adenosyl-L-homocysteine. It catalyses the reaction adenosine(37) in tRNA + 2 reduced [2Fe-2S]-[ferredoxin] + 2 S-adenosyl-L-methionine = 2-methyladenosine(37) in tRNA + 5'-deoxyadenosine + L-methionine + 2 oxidized [2Fe-2S]-[ferredoxin] + S-adenosyl-L-homocysteine. In terms of biological role, specifically methylates position 2 of adenine 2503 in 23S rRNA and position 2 of adenine 37 in tRNAs. m2A2503 modification seems to play a crucial role in the proofreading step occurring at the peptidyl transferase center and thus would serve to optimize ribosomal fidelity. This is Dual-specificity RNA methyltransferase RlmN from Yersinia pseudotuberculosis serotype O:3 (strain YPIII).